Consider the following 289-residue polypeptide: Homeobox protein engrailed-2 (289 aa).

Basic and acidic residues-rich tracts occupy residues 1–12 (MEEGGRSPREEA) and 60–83 (EFGR…ESRR). 2 disordered regions span residues 1–166 (MEEG…GNQP) and 179–206 (SDRP…PRTA). Residues 96-114 (VPGGGGGGGGGSPGRGEGG) are compositionally biased toward gly residues. Positions 142 to 160 (LSGAELSVSSDSDSSQAGS) are enriched in low complexity. A DNA-binding region (homeobox) is located at residues 200–259 (DKRPRTAFTAEQLQRLKAEFQTNRYLTEQRRQSLAQELGLNESQIKIWFQNKRAKIKKAT).

Belongs to the engrailed homeobox family.

It localises to the nucleus. The sequence is that of Homeobox protein engrailed-2 (EN2) from Gallus gallus (Chicken).